Reading from the N-terminus, the 177-residue chain is Small ribosomal subunit protein eS10z (177 aa).

The interval 90 to 177 (TLKKSAKPGG…AAAPSGSGFP (88 aa)) is disordered. Positions 108-140 (DRQRGPPRSDGDRPRFGDRDGYRGGPRGGDEKG) are enriched in basic and acidic residues. Low complexity predominate over residues 141-150 (GAPADFQPSF). Gly residues predominate over residues 151–165 (QGGGGRPGFGRGAGG). Residues 166–177 (YSAAAPSGSGFP) are compositionally biased toward low complexity.

This sequence belongs to the eukaryotic ribosomal protein eS10 family.

The protein resides in the cytoplasm. In Arabidopsis thaliana (Mouse-ear cress), this protein is Small ribosomal subunit protein eS10z (RPS10A).